The following is a 554-amino-acid chain: Urocanate hydratase (554 aa).

Residues Gly-51–Gly-52, Gln-129, Gly-175–Gly-177, Glu-195, Asn-241–Ala-242, Gln-262–His-266, Tyr-272–Leu-273, and Tyr-321 each bind NAD(+). Cys-409 is a catalytic residue. Gly-491 lines the NAD(+) pocket.

This sequence belongs to the urocanase family. Requires NAD(+) as cofactor.

It is found in the cytoplasm. It carries out the reaction 4-imidazolone-5-propanoate = trans-urocanate + H2O. Its pathway is amino-acid degradation; L-histidine degradation into L-glutamate; N-formimidoyl-L-glutamate from L-histidine: step 2/3. Its function is as follows. Catalyzes the conversion of urocanate to 4-imidazolone-5-propionate. In Caulobacter vibrioides (strain ATCC 19089 / CIP 103742 / CB 15) (Caulobacter crescentus), this protein is Urocanate hydratase.